We begin with the raw amino-acid sequence, 65 residues long: MSNGIKRYISVMQLTLINKKHMHYAPHIAMLVTLLLIGQQLAKLSWRMILPAYSPAIEMNDATEI.

The sequence is that of Protein MalX (malX) from Klebsiella pneumoniae.